The primary structure comprises 358 residues: MREQLLAVERVQAIEWRDGALYLLDQRLLPHRQTWLRFDHAAEVADAIRDMVVRGAPAIGIAAAYGLVLGARARLQAGGDWREALEADFARLEQSRPTAVNLFWALQRMRERLARLKDDGEVLGQLEAEAVGIHASDREANLTMAQLGMELIRKHQGNPQVVLTHCNAGALATGGFGTALGVIRAAHLEGLLEHVYVDETRPWLQGARLTAWELAGDGVPVSLNVDAAAAHLMKTKGITWVIVGADRITANGDVANKIGTYQLAVNAMHHGMRFMVVAPSSTIDMSLESGDDILLEERSGSELLEVAGQPVAADVPAVNPVFDVTPADLVDYIVTEKGVIERPDSTKLAQLMCRKRLH.

Substrate is bound by residues 54–56, arginine 96, and glutamine 205; that span reads RGA. Aspartate 246 serves as the catalytic Proton donor. Residue 256 to 257 participates in substrate binding; the sequence is NK.

It belongs to the eIF-2B alpha/beta/delta subunits family. MtnA subfamily.

It catalyses the reaction 5-(methylsulfanyl)-alpha-D-ribose 1-phosphate = 5-(methylsulfanyl)-D-ribulose 1-phosphate. It participates in amino-acid biosynthesis; L-methionine biosynthesis via salvage pathway; L-methionine from S-methyl-5-thio-alpha-D-ribose 1-phosphate: step 1/6. Its function is as follows. Catalyzes the interconversion of methylthioribose-1-phosphate (MTR-1-P) into methylthioribulose-1-phosphate (MTRu-1-P). The chain is Methylthioribose-1-phosphate isomerase from Ectopseudomonas mendocina (strain ymp) (Pseudomonas mendocina).